Consider the following 130-residue polypeptide: Small ribosomal subunit protein uS11 (130 aa).

This sequence belongs to the universal ribosomal protein uS11 family. In terms of assembly, part of the 30S ribosomal subunit. Interacts with proteins S7 and S18. Binds to IF-3.

Located on the platform of the 30S subunit, it bridges several disparate RNA helices of the 16S rRNA. Forms part of the Shine-Dalgarno cleft in the 70S ribosome. This chain is Small ribosomal subunit protein uS11, found in Xylella fastidiosa (strain 9a5c).